Reading from the N-terminus, the 1240-residue chain is MPVSLAVCETTANVVNAALRESLGSCVARAALSADEAKTSNGGGDGSSTSGSSTDNLQSQIVANAKRVLLAKIDYEEVDNYHESVLAKLKSKYIVIKPDSNGGAASNGNGNYNGSNKTNGKFGAGNGHDNNGNGNGIVNGGTSALNGGNNRKQIVVVDHQSSNQHGSPSNPNELPKPKRVLYQREHIRIGWKQSERKWQVGTGMLNVGNTCYLNSSLQALFHIPSLANWLVSESAHLENCNISESCGSNGCIICAMAKTLQSTQSNQSAVRPFLIYSKLRQICKHMVVGRQEDAHEFLRFLIEAMEKAYLMRFRNYKELDQLVKETTPLNQIFGGYLRSEVRCLSCNHVSITFQHFQDLLLDIRKSDTLEDAFDGYFSRERLEDMGYKCEGCKKKVSATKQFSLERAPITLCIQLKRFSMMGNKLTKQISFKPRIDLSRFAARSPTAAAQPLSYRLVSMVTHLGVSQHCGHYTAIGLTETGSYYNFDDSCVRPIAMQSVCNTNAYIMFYELDVNGNGHVVAPKMNGMRLTTNGGQQHSSPVVATAPAAVVSATATSTSASVSAAAVTSPRFIGPQLPNGYGNSNGHALGGGAAKTAIQFKTTPQKHQQQQQAQTQYQLNGHINGAAKFQTGAANANANKSSCNTLNNSKQHQPQQQQQQPQHILPISSDEEEDSDDDNDNDNVKTNKAPQLPSMPKMFEESSESVALTAKLKPKTALKSLVPYESASEEEEQQQQQQQQTLQQQAATNSRKRRSGADSSDTDDDDDEEQQQQQQQQPSLILRNGHAKTNGNLLNSSSSKTKSASNASSANVNSSKQKTDAIDEIFKSLNNYKNKHRNDHNHVDDDDDDDEDEDEDEDEAQAQAEKKTVTKSSSSSSSTSLTNGWQQSQNGKATASPKTPPSPAVIKTKTGIWQVTRNDEDDDENVDGVADADDDDDNDEVAEPAVVTAKNHKNPFAAGKATATTDANPSAKRQKLLNGSSKSQQTTPRIGNGYQGESLPNGNAVVSELLKQNHRGYGSSVLSWNGKASELDKETFDLVCAKRIAGYGAAAADEHCCDVNSGHSSNYGTNYKSLNNDMSSSSSSSSSTNSSSNSSSRSNGNSSNCPPCDLLAEAREQRKRDDDDEEENEMDRGRQRKIKSASVKCGSGATAAPPGYNPFQEYESQKRWHSNKSGSYSRFYHHPNYRSNFQQRNKFKHNRFAGGGGGAKFQQQRALQRHLASGGGFTRRQHHQSSGQQQQQS.

2 disordered regions span residues 37-56 and 100-144; these read AKTS…STDN and SNGG…GTSA. Low complexity-rich tracts occupy residues 47-56 and 101-132; these read SSTSGSSTDN and NGGA…DNNG. The 311-residue stretch at 202–512 folds into the USP domain; it reads TGMLNVGNTC…NAYIMFYELD (311 aa). Residue cysteine 211 is the Nucleophile of the active site. The active-site Proton acceptor is histidine 471. The tract at residues 637 to 705 is disordered; it reads ANKSSCNTLN…KMFEESSESV (69 aa). The segment covering 639-649 has biased composition (polar residues); sequence KSSCNTLNNSK. Over residues 650–662 the composition is skewed to low complexity; that stretch reads QHQPQQQQQQPQH. Residues 668 to 680 show a composition bias toward acidic residues; the sequence is SDEEEDSDDDNDN. At threonine 715 the chain carries Phosphothreonine. 4 disordered regions span residues 723 to 818, 831 to 998, 1076 to 1163, and 1198 to 1240; these read YESA…KQKT, YKNK…GESL, DMSS…EYES, and RFAG…QQQS. A phosphoserine mark is found at serine 725 and serine 727. The segment covering 733-744 has biased composition (low complexity); that stretch reads QQQQQQQTLQQQ. Positions 759 to 769 are enriched in acidic residues; it reads SDTDDDDDEEQ. Residues 794 to 815 are compositionally biased toward low complexity; it reads NSSSSKTKSASNASSANVNSSK. The segment covering 843–859 has biased composition (acidic residues); that stretch reads DDDDDDDEDEDEDEDEA. Residues 869 to 879 show a composition bias toward low complexity; the sequence is TKSSSSSSSTS. Polar residues predominate over residues 880–890; sequence LTNGWQQSQNG. Serine 895 bears the Phosphoserine mark. Threonine 898 bears the Phosphothreonine mark. Serine 901 bears the Phosphoserine mark. The span at 918–941 shows a compositional bias: acidic residues; it reads DEDDDENVDGVADADDDDDNDEVA. Polar residues predominate over residues 976-988; sequence LNGSSKSQQTTPR. A compositionally biased stretch (low complexity) spans 1076 to 1103; that stretch reads DMSSSSSSSSSTNSSSNSSSRSNGNSSN. Positions 1111–1120 are enriched in basic and acidic residues; it reads AEAREQRKRD. The span at 1231–1240 shows a compositional bias: low complexity; that stretch reads QSSGQQQQQS.

Belongs to the peptidase C19 family. In terms of assembly, interacts with atms/PAF1, but not with CycT.

It is found in the nucleus. The protein localises to the nucleolus. The enzyme catalyses Thiol-dependent hydrolysis of ester, thioester, amide, peptide and isopeptide bonds formed by the C-terminal Gly of ubiquitin (a 76-residue protein attached to proteins as an intracellular targeting signal).. Required for maintaining multiple types of adult stem cells, including male and female germline, epithelial follicle cell and intestinal stem cells. May function as a transcriptional repressor by continually deubiquiting histone H2B at the promoters of genes critical for cellular differentiation, thereby preventing histone H3 'Lys-4' trimethylation (H3K4). Controls selective autophagy activation by ubiquitinated proteins. The polypeptide is Ubiquitin carboxyl-terminal hydrolase 36 (Usp36) (Drosophila grimshawi (Hawaiian fruit fly)).